Reading from the N-terminus, the 348-residue chain is MEENKQKALSAALSQIERQFGKGSVMRMGDSTVSRDIEAISTGSLGLDIALGIGGLPKGRIVEIYGPESSGKTTLTLQVIAECQKMGGTAAFIDAEHALDPSYAQKLGVKVDELLVSQPDTGEQALEITDMLVRSAAVDVVIIDSVAALTPKAEIEGEMGDSHVGLQARLMSQALRKLTANIKRSNTLVIFINQIRMKIGVMFGSPETTTGGNALKFYASVRLDIRRIGSIKKGEEILGSETRVKVVKNKVAPPFKMTEFDILYNEGISRESEIINLGVQLNLIEKSGAWYSYKQEKIGQGKENVRLYLKENPQVAAELEQQIRTELLEKKLSVLASASEDLFETIDD.

66–73 (GPESSGKT) serves as a coordination point for ATP.

Belongs to the RecA family.

It is found in the cytoplasm. Its function is as follows. Can catalyze the hydrolysis of ATP in the presence of single-stranded DNA, the ATP-dependent uptake of single-stranded DNA by duplex DNA, and the ATP-dependent hybridization of homologous single-stranded DNAs. It interacts with LexA causing its activation and leading to its autocatalytic cleavage. The polypeptide is Protein RecA (Legionella pneumophila (strain Lens)).